We begin with the raw amino-acid sequence, 430 residues long: DNA damage-inducible protein DIN7 (430 aa).

The tract at residues 1–96 (MGIPGLLPQL…HTETRRRKKR (96 aa)) is N-domain. Mg(2+) contacts are provided by D30, D78, E150, D152, D171, D173, and D227. Positions 114–247 (NAMEYFQKSV…VTAMKIVKRY (134 aa)) are I-domain.

Belongs to the XPG/RAD2 endonuclease family. Mg(2+) serves as cofactor.

Its subcellular location is the nucleus. Its function is as follows. 5'-&gt;3' double-stranded DNA exonuclease. The sequence is that of DNA damage-inducible protein DIN7 (DIN7) from Saccharomyces cerevisiae (strain ATCC 204508 / S288c) (Baker's yeast).